Reading from the N-terminus, the 187-residue chain is Elongation factor P (187 aa).

This sequence belongs to the elongation factor P family.

The protein resides in the cytoplasm. It functions in the pathway protein biosynthesis; polypeptide chain elongation. Its function is as follows. Involved in peptide bond synthesis. Stimulates efficient translation and peptide-bond synthesis on native or reconstituted 70S ribosomes in vitro. Probably functions indirectly by altering the affinity of the ribosome for aminoacyl-tRNA, thus increasing their reactivity as acceptors for peptidyl transferase. This is Elongation factor P from Flavobacterium psychrophilum (strain ATCC 49511 / DSM 21280 / CIP 103535 / JIP02/86).